The chain runs to 629 residues: Phosphomethylpyrimidine synthase (629 aa).

A disordered region spans residues 1-21 (MSIKAKNAAHLRESAQVDSGS). Substrate contacts are provided by residues N233, M262, Y291, H327, 347–349 (SRG), 388–391 (DGLR), and E427. H431 is a Zn(2+) binding site. Y454 provides a ligand contact to substrate. H495 is a binding site for Zn(2+). Positions 575, 578, and 583 each coordinate [4Fe-4S] cluster.

It belongs to the ThiC family. As to quaternary structure, homodimer. [4Fe-4S] cluster is required as a cofactor.

The enzyme catalyses 5-amino-1-(5-phospho-beta-D-ribosyl)imidazole + S-adenosyl-L-methionine = 4-amino-2-methyl-5-(phosphooxymethyl)pyrimidine + CO + 5'-deoxyadenosine + formate + L-methionine + 3 H(+). Its pathway is cofactor biosynthesis; thiamine diphosphate biosynthesis. Its function is as follows. Catalyzes the synthesis of the hydroxymethylpyrimidine phosphate (HMP-P) moiety of thiamine from aminoimidazole ribotide (AIR) in a radical S-adenosyl-L-methionine (SAM)-dependent reaction. This Pseudomonas syringae pv. syringae (strain B728a) protein is Phosphomethylpyrimidine synthase.